The chain runs to 265 residues: Tryptophan synthase alpha chain (265 aa).

Active-site proton acceptor residues include Glu-49 and Glu-60.

The protein belongs to the TrpA family. As to quaternary structure, tetramer of two alpha and two beta chains.

It carries out the reaction (1S,2R)-1-C-(indol-3-yl)glycerol 3-phosphate + L-serine = D-glyceraldehyde 3-phosphate + L-tryptophan + H2O. It functions in the pathway amino-acid biosynthesis; L-tryptophan biosynthesis; L-tryptophan from chorismate: step 5/5. In terms of biological role, the alpha subunit is responsible for the aldol cleavage of indoleglycerol phosphate to indole and glyceraldehyde 3-phosphate. The chain is Tryptophan synthase alpha chain from Janthinobacterium sp. (strain Marseille) (Minibacterium massiliensis).